A 138-amino-acid polypeptide reads, in one-letter code: RutC family protein UK114 (138 aa).

It belongs to the RutC family.

Molecular chaperone. Seems to fulfill an ATP-independent, HSP70-like function in protein folding. May protect essential factors of cell proliferation during heat shock. No role in calpain activation. This chain is RutC family protein UK114, found in Drosophila melanogaster (Fruit fly).